Reading from the N-terminus, the 700-residue chain is Protein claret segregational (700 aa).

2 positions are modified to phosphoserine: Ser94 and Ser96. Residues 141–185 (APSSITATAVKRPPVTRPAPRAAGGAAAKKPAGTGAAASSGAAAA) form a disordered region. A compositionally biased stretch (low complexity) spans 149–185 (AVKRPPVTRPAPRAAGGAAAKKPAGTGAAASSGAAAA). Residues 196 to 346 (KARFHDLLEK…ELHNTVMDLR (151 aa)) are a coiled coil. In terms of domain architecture, Kinesin motor spans 348 to 670 (NIRVFCRIRP…LRFAASVNSC (323 aa)). 434-441 (GQTGSGKT) contacts ATP. The required for minus-end directionality stretch occupies residues 664-668 (AASVN). The tract at residues 681–700 (LNNSVANSSTQSNNSGSFDK) is disordered.

Belongs to the TRAFAC class myosin-kinesin ATPase superfamily. Kinesin family. NCD subfamily.

Its subcellular location is the cytoplasm. It localises to the cytoskeleton. It catalyses the reaction ATP + H2O = ADP + phosphate + H(+). Functionally, minus-end-directed microtubule-based motor protein. Has ATPase activity. Required for normal chromosomal segregation in meiosis in females, and in early mitotic divisions of the embryo. This is Protein claret segregational (ncd) from Drosophila melanogaster (Fruit fly).